Here is a 1296-residue protein sequence, read N- to C-terminus: DNA-directed RNA polymerase subunit beta' (1296 aa).

Residues Cys-60, Cys-62, Cys-75, and Cys-78 each contribute to the Zn(2+) site. Over residues 185-202 the composition is skewed to basic and acidic residues; sequence EEEGGKAAEKRKLRDSAD. The tract at residues 185-204 is disordered; the sequence is EEEGGKAAEKRKLRDSADRQ. 3 residues coordinate Mg(2+): Asp-535, Asp-537, and Asp-539. 4 residues coordinate Zn(2+): Cys-877, Cys-954, Cys-961, and Cys-964.

It belongs to the RNA polymerase beta' chain family. In terms of assembly, the RNAP catalytic core consists of 2 alpha, 1 beta, 1 beta' and 1 omega subunit. When a sigma factor is associated with the core the holoenzyme is formed, which can initiate transcription. Mg(2+) is required as a cofactor. The cofactor is Zn(2+).

The enzyme catalyses RNA(n) + a ribonucleoside 5'-triphosphate = RNA(n+1) + diphosphate. Functionally, DNA-dependent RNA polymerase catalyzes the transcription of DNA into RNA using the four ribonucleoside triphosphates as substrates. In Kocuria rhizophila (strain ATCC 9341 / DSM 348 / NBRC 103217 / DC2201), this protein is DNA-directed RNA polymerase subunit beta'.